Consider the following 321-residue polypeptide: Biotin synthase (321 aa).

The region spanning 45–271 (FFGKKVKLNM…INPSKEIRIA (227 aa)) is the Radical SAM core domain. 3 residues coordinate [4Fe-4S] cluster: Cys-63, Cys-67, and Cys-70. Residues Cys-106, Cys-139, Cys-199, and Arg-269 each contribute to the [2Fe-2S] cluster site.

The protein belongs to the radical SAM superfamily. Biotin synthase family. In terms of assembly, homodimer. The cofactor is [4Fe-4S] cluster. [2Fe-2S] cluster serves as cofactor.

It carries out the reaction (4R,5S)-dethiobiotin + (sulfur carrier)-SH + 2 reduced [2Fe-2S]-[ferredoxin] + 2 S-adenosyl-L-methionine = (sulfur carrier)-H + biotin + 2 5'-deoxyadenosine + 2 L-methionine + 2 oxidized [2Fe-2S]-[ferredoxin]. It functions in the pathway cofactor biosynthesis; biotin biosynthesis; biotin from 7,8-diaminononanoate: step 2/2. Catalyzes the conversion of dethiobiotin (DTB) to biotin by the insertion of a sulfur atom into dethiobiotin via a radical-based mechanism. This Staphylococcus haemolyticus (strain JCSC1435) protein is Biotin synthase.